The sequence spans 282 residues: Bifunctional protein FolD (282 aa).

NADP(+) is bound by residues 166 to 168 and Ser-191; that span reads GRS.

It belongs to the tetrahydrofolate dehydrogenase/cyclohydrolase family. As to quaternary structure, homodimer.

It catalyses the reaction (6R)-5,10-methylene-5,6,7,8-tetrahydrofolate + NADP(+) = (6R)-5,10-methenyltetrahydrofolate + NADPH. The enzyme catalyses (6R)-5,10-methenyltetrahydrofolate + H2O = (6R)-10-formyltetrahydrofolate + H(+). Its pathway is one-carbon metabolism; tetrahydrofolate interconversion. Functionally, catalyzes the oxidation of 5,10-methylenetetrahydrofolate to 5,10-methenyltetrahydrofolate and then the hydrolysis of 5,10-methenyltetrahydrofolate to 10-formyltetrahydrofolate. The chain is Bifunctional protein FolD from Acidovorax sp. (strain JS42).